The chain runs to 484 residues: Magnesium transporter MRS2-3 (484 aa).

Disordered regions lie at residues 1 to 40 (MRGA…GRKK) and 141 to 186 (TKPQ…QSLE). The segment covering 10–24 (NFSTNPSTPNTGQPT) has biased composition (polar residues). Positions 203–275 (ACLEAASSSL…LLDDDEDMAE (73 aa)) form a coiled coil. The disordered stretch occupies residues 286–320 (LEDSSNSSMNESDTFEVDLPQGDEDDRLPPEFASE). The segment covering 298–311 (DTFEVDLPQGDEDD) has biased composition (acidic residues). Residues 416–436 (GVMLTTATLVMSAFIAVAGVF) form a helical membrane-spanning segment. A Required for magnesium transport activity motif is present at residues 437 to 439 (GMN). Residues 455-475 (FIWTVIGGSIGSICLYVGAIG) traverse the membrane as a helical segment.

This sequence belongs to the CorA metal ion transporter (MIT) (TC 1.A.35.5) family. Expressed in the whole plant.

It localises to the membrane. In terms of biological role, magnesium transporter that may mediate the influx of magnesium. The polypeptide is Magnesium transporter MRS2-3 (MRS2-3) (Arabidopsis thaliana (Mouse-ear cress)).